Reading from the N-terminus, the 242-residue chain is Probable transcriptional regulatory protein Cthe_2075 (242 aa).

It belongs to the TACO1 family.

The protein localises to the cytoplasm. This Acetivibrio thermocellus (strain ATCC 27405 / DSM 1237 / JCM 9322 / NBRC 103400 / NCIMB 10682 / NRRL B-4536 / VPI 7372) (Clostridium thermocellum) protein is Probable transcriptional regulatory protein Cthe_2075.